The following is a 534-amino-acid chain: uncharacterized protein (534 aa).

Disordered stretches follow at residues 1–93, 123–260, 313–349, and 383–505; these read MSSS…DDTG, SPES…LSSA, AAAT…TFPS, and PWGA…QGCP. Positions 35–45 are enriched in pro residues; it reads GPGPDPGPEPG. 2 positions are modified to phosphoserine: S87 and S123. Residues 145 to 161 show a composition bias toward low complexity; the sequence is RGAAAQRCGEAARAEAG. Basic and acidic residues predominate over residues 230 to 239; that stretch reads SPKDPRDTPR.

This is an uncharacterized protein from Bos taurus (Bovine).